The chain runs to 347 residues: MCTKMEQPFYHDDSYAAAGYGRTPGGLSLHDYKLLKPSLALNLSDPYRNLKAPGARGPGPEGNGGGSYFSSQGSDTGASLKLASSELERLIVPNSNGVITTTPTPPGQYFYPRGGGSGGGAGGAGGGVTEEQEGFADGFVKALDDLHKMNHVTPPNVSLGASGGPPAGPGGVYAGPEPPPVYTNLSSYSPASAPSGGAGAAVGTGSSYPTATISYLPHAPPFAGGHPAQLGLGRGASAFKEEPQTVPEARSRDATPPVSPINMEDQERIKVERKRLRNRLAATKCRKRKLERIARLEDKVKTLKAENAGLSSTAGLLREQVAQLKQKVMTHVSNGCQLLLGVKGHAF.

Glycyl lysine isopeptide (Lys-Gly) (interchain with G-Cter in SUMO2) cross-links involve residues lysine 4, lysine 33, and lysine 36. The segment at 50 to 77 is disordered; it reads LKAPGARGPGPEGNGGGSYFSSQGSDTG. Residues 56-67 show a composition bias toward gly residues; the sequence is RGPGPEGNGGGS. Polar residues predominate over residues 68 to 77; that stretch reads YFSSQGSDTG. Residue lysine 81 forms a Glycyl lysine isopeptide (Lys-Gly) (interchain with G-Cter in SUMO2) linkage. Phosphothreonine is present on residues threonine 102 and threonine 104. Serine 117 bears the Phosphoserine mark. Residue lysine 141 forms a Glycyl lysine isopeptide (Lys-Gly) (interchain with G-Cter in SUMO2) linkage. An N6-acetyllysine; alternate modification is found at lysine 240. A Glycyl lysine isopeptide (Lys-Gly) (interchain with G-Cter in SUMO1); alternate cross-link involves residue lysine 240. Lysine 240 is covalently cross-linked (Glycyl lysine isopeptide (Lys-Gly) (interchain with G-Cter in SUMO2); alternate). Over residues 241-253 the composition is skewed to basic and acidic residues; sequence EEPQTVPEARSRD. Residues 241–260 form a disordered region; that stretch reads EEPQTVPEARSRDATPPVSP. Serine 251 is modified (phosphoserine). At threonine 255 the chain carries Phosphothreonine. Serine 259 carries the post-translational modification Phosphoserine. The segment at 268–295 is basic motif; that stretch reads RIKVERKRLRNRLAATKCRKRKLERIAR. The bZIP domain maps to 268 to 331; sequence RIKVERKRLR…AQLKQKVMTH (64 aa). Residues 296–324 form a leucine-zipper region; the sequence is LEDKVKTLKAENAGLSSTAGLLREQVAQL. Lysine 343 is covalently cross-linked (Glycyl lysine isopeptide (Lys-Gly) (interchain with G-Cter in SUMO2)).

It belongs to the bZIP family. Jun subfamily. In terms of assembly, binds DNA as a homodimer or as a heterodimer with another member of the Jun/Fos family. Component of an AP-1 transcription factor complex composed of JUN-FOS heterodimers. As part of the AP-1 transcription factor complex, forms heterodimers with FOSB, thereby binding to the AP-1 consensus sequence and stimulating transcription. Interacts with ITCH (via its WW domains). Post-translationally, ubiquitinated by ITCH, leading to its degradation.

Its subcellular location is the nucleus. In terms of biological role, transcription factor involved in regulating gene activity following the primary growth factor response. Binds to the DNA sequence 5'-TGA[GC]TCA-3'. Heterodimerizes with proteins of the FOS family to form an AP-1 transcription complex, thereby enhancing its DNA binding activity to an AP-1 consensus sequence and its transcriptional activity. The protein is Transcription factor JunB (JUNB) of Bos taurus (Bovine).